We begin with the raw amino-acid sequence, 144 residues long: Major allergen Blo t 12 (144 aa).

A signal peptide spans Met-1–Ser-20. The segment at Gln-24 to His-77 is disordered. The 53-residue stretch at His-92–Asn-144 folds into the Chitin-binding type-2 domain. An intrachain disulfide couples Cys-127 to Cys-140.

This Blomia tropicalis (Mite) protein is Major allergen Blo t 12.